The sequence spans 360 residues: UDP-3-O-acylglucosamine N-acyltransferase (360 aa).

The active-site Proton acceptor is the histidine 256. Positions 341–360 (EGSGAETAARPDDDRDEGRG) are disordered. The span at 349-360 (ARPDDDRDEGRG) shows a compositional bias: basic and acidic residues.

Belongs to the transferase hexapeptide repeat family. LpxD subfamily. In terms of assembly, homotrimer.

It catalyses the reaction a UDP-3-O-[(3R)-3-hydroxyacyl]-alpha-D-glucosamine + a (3R)-hydroxyacyl-[ACP] = a UDP-2-N,3-O-bis[(3R)-3-hydroxyacyl]-alpha-D-glucosamine + holo-[ACP] + H(+). Its pathway is bacterial outer membrane biogenesis; LPS lipid A biosynthesis. Functionally, catalyzes the N-acylation of UDP-3-O-acylglucosamine using 3-hydroxyacyl-ACP as the acyl donor. Is involved in the biosynthesis of lipid A, a phosphorylated glycolipid that anchors the lipopolysaccharide to the outer membrane of the cell. This is UDP-3-O-acylglucosamine N-acyltransferase from Rhodopseudomonas palustris (strain TIE-1).